Here is a 256-residue protein sequence, read N- to C-terminus: Deoxyribose-phosphate aldolase (256 aa).

Catalysis depends on Asp-102, which acts as the Proton donor/acceptor. The active-site Schiff-base intermediate with acetaldehyde is Lys-165. Lys-197 acts as the Proton donor/acceptor in catalysis.

This sequence belongs to the DeoC/FbaB aldolase family. DeoC type 2 subfamily.

It localises to the cytoplasm. It carries out the reaction 2-deoxy-D-ribose 5-phosphate = D-glyceraldehyde 3-phosphate + acetaldehyde. It functions in the pathway carbohydrate degradation; 2-deoxy-D-ribose 1-phosphate degradation; D-glyceraldehyde 3-phosphate and acetaldehyde from 2-deoxy-alpha-D-ribose 1-phosphate: step 2/2. In terms of biological role, catalyzes a reversible aldol reaction between acetaldehyde and D-glyceraldehyde 3-phosphate to generate 2-deoxy-D-ribose 5-phosphate. This Shewanella oneidensis (strain ATCC 700550 / JCM 31522 / CIP 106686 / LMG 19005 / NCIMB 14063 / MR-1) protein is Deoxyribose-phosphate aldolase.